The sequence spans 406 residues: Succinylornithine transaminase (406 aa).

Lys-252 is subject to N6-(pyridoxal phosphate)lysine.

This sequence belongs to the class-III pyridoxal-phosphate-dependent aminotransferase family. AstC subfamily. Pyridoxal 5'-phosphate serves as cofactor.

The catalysed reaction is N(2)-succinyl-L-ornithine + 2-oxoglutarate = N-succinyl-L-glutamate 5-semialdehyde + L-glutamate. It functions in the pathway amino-acid degradation; L-arginine degradation via AST pathway; L-glutamate and succinate from L-arginine: step 3/5. Catalyzes the transamination of N(2)-succinylornithine and alpha-ketoglutarate into N(2)-succinylglutamate semialdehyde and glutamate. Can also act as an acetylornithine aminotransferase. This is Succinylornithine transaminase from Escherichia coli (strain SMS-3-5 / SECEC).